Consider the following 92-residue polypeptide: Probable Fe(2+)-trafficking protein (92 aa).

Belongs to the Fe(2+)-trafficking protein family.

Could be a mediator in iron transactions between iron acquisition and iron-requiring processes, such as synthesis and/or repair of Fe-S clusters in biosynthetic enzymes. The chain is Probable Fe(2+)-trafficking protein from Shewanella halifaxensis (strain HAW-EB4).